Reading from the N-terminus, the 361-residue chain is Phosphoserine aminotransferase (361 aa).

An L-glutamate-binding site is contributed by R43. Residues 77–78, W103, T153, D173, and Q196 contribute to the pyridoxal 5'-phosphate site; that span reads AS. K197 bears the N6-(pyridoxal phosphate)lysine mark. 238–239 provides a ligand contact to pyridoxal 5'-phosphate; the sequence is NT.

It belongs to the class-V pyridoxal-phosphate-dependent aminotransferase family. SerC subfamily. As to quaternary structure, homodimer. Requires pyridoxal 5'-phosphate as cofactor.

Its subcellular location is the cytoplasm. It carries out the reaction O-phospho-L-serine + 2-oxoglutarate = 3-phosphooxypyruvate + L-glutamate. It catalyses the reaction 4-(phosphooxy)-L-threonine + 2-oxoglutarate = (R)-3-hydroxy-2-oxo-4-phosphooxybutanoate + L-glutamate. Its pathway is amino-acid biosynthesis; L-serine biosynthesis; L-serine from 3-phospho-D-glycerate: step 2/3. It participates in cofactor biosynthesis; pyridoxine 5'-phosphate biosynthesis; pyridoxine 5'-phosphate from D-erythrose 4-phosphate: step 3/5. Its function is as follows. Catalyzes the reversible conversion of 3-phosphohydroxypyruvate to phosphoserine and of 3-hydroxy-2-oxo-4-phosphonooxybutanoate to phosphohydroxythreonine. The chain is Phosphoserine aminotransferase from Pseudomonas syringae pv. tomato (strain ATCC BAA-871 / DC3000).